We begin with the raw amino-acid sequence, 430 residues long: Glutamyl-tRNA reductase (430 aa).

Substrate-binding positions include 49 to 52 (TCNR), serine 109, 114 to 116 (EGQ), and glutamine 120. Cysteine 50 (nucleophile) is an active-site residue. 189–194 (GAGKMA) lines the NADP(+) pocket.

This sequence belongs to the glutamyl-tRNA reductase family. Homodimer.

The enzyme catalyses (S)-4-amino-5-oxopentanoate + tRNA(Glu) + NADP(+) = L-glutamyl-tRNA(Glu) + NADPH + H(+). The protein operates within porphyrin-containing compound metabolism; protoporphyrin-IX biosynthesis; 5-aminolevulinate from L-glutamyl-tRNA(Glu): step 1/2. It participates in porphyrin-containing compound metabolism; chlorophyll biosynthesis. In terms of biological role, catalyzes the NADPH-dependent reduction of glutamyl-tRNA(Glu) to glutamate 1-semialdehyde (GSA). The protein is Glutamyl-tRNA reductase of Crocosphaera subtropica (strain ATCC 51142 / BH68) (Cyanothece sp. (strain ATCC 51142)).